Reading from the N-terminus, the 722-residue chain is Nucleolar protein 10 (722 aa).

WD repeat units lie at residues 50 to 90 (EMPT…LKFE), 174 to 213 (TDAAEMNVCDINPVHQLFAAGTLEGRVDCWDPRVRTRVAA), 228 to 266 (EGLPSVSALKFNDSLGLAVGTSTGQILVYDLRSSRPLLV), 270 to 308 (YYGLPIKSLHFHNSLDLVLSADSKIIKMWNKDNGKVFSS), and 310 to 349 (EPQANINDVCLYPASGMLFTANEDPKMNTFYIPALGPAPR). 2 coiled-coil regions span residues 423–476 (EYRK…ANVA) and 511–534 (SNVAERRRKSLLEEEQEQAEEEQE). Disordered stretches follow at residues 521–555 (LLEEEQEQAEEEQEPEGRGSSEDDSSDEDDKGWVQ), 572–607 (SYIQRQERRQQDRNTRLQSSDTHTQQSHGAQKPRFY), 616–635 (RSFSDVSRKQKTHKASLEER), and 664–722 (TEKQ…RRPF). Over residues 523–534 (EEEQEQAEEEQE) the composition is skewed to acidic residues. Residues 572-586 (SYIQRQERRQQDRNT) are compositionally biased toward basic and acidic residues. Positions 587 to 600 (RLQSSDTHTQQSHG) are enriched in polar residues. The stretch at 620–681 (DVSRKQKTHK…QAERDHHEER (62 aa)) forms a coiled coil. The segment covering 664–682 (TEKQRFQQQAERDHHEERR) has biased composition (basic and acidic residues). Basic residues-rich tracts occupy residues 683-693 (RIRRSAGHLHS) and 702-722 (GGGRGRGGGRGRGGGRGRRPF).

The protein belongs to the WD repeat NOL10/ENP2 family.

It localises to the nucleus. The protein resides in the nucleolus. The sequence is that of Nucleolar protein 10 (nol10) from Danio rerio (Zebrafish).